The following is a 307-amino-acid chain: 2-carboxy-1,4-naphthoquinone phytyltransferase (307 aa).

The next 8 membrane-spanning stretches (helical) occupy residues 27-47, 51-71, 98-118, 125-145, 147-167, 177-197, 223-243, and 284-304; these read MYTVAVVPITVGSAVAYGLTG, GDVFTIFLLSAIAIIAWINLS, LVFLISNFFLLAGVLGLMSMS, TVLELIGVAIFLGYTYQGPPF, LGYLGLGELICLITFGPLAIA, FSWNLLTPSVFVGISTAIILF, LGSQVLTLSVVSLYLITAIGV, and FIAVNLHFFSGMLMAAGYGWA.

Belongs to the MenA family. Type 2 subfamily.

Its subcellular location is the cell inner membrane. It catalyses the reaction 2-carboxy-1,4-naphthoquinone + phytyl diphosphate + H(+) = demethylphylloquinone + CO2 + diphosphate. It participates in cofactor biosynthesis; phylloquinone biosynthesis. Involved in the synthesis of phylloquinone (vitamin K1). Catalyzes the transfer of a prenyl chain to 2-carboxy-1,4-naphthoquinone. The polypeptide is 2-carboxy-1,4-naphthoquinone phytyltransferase (Synechocystis sp. (strain ATCC 27184 / PCC 6803 / Kazusa)).